Here is a 517-residue protein sequence, read N- to C-terminus: Maturase K (517 aa).

It belongs to the intron maturase 2 family. MatK subfamily.

Its subcellular location is the plastid. The protein localises to the chloroplast. Functionally, usually encoded in the trnK tRNA gene intron. Probably assists in splicing its own and other chloroplast group II introns. This Trillium maculatum (Spotted wakerobin) protein is Maturase K.